A 181-amino-acid polypeptide reads, in one-letter code: Protein Syd (181 aa).

Belongs to the Syd family.

It localises to the cell inner membrane. Its function is as follows. Interacts with the SecY protein in vivo. May bind preferentially to an uncomplexed state of SecY, thus functioning either as a chelating agent for excess SecY in the cell or as a regulatory factor that negatively controls the translocase function. The protein is Protein Syd of Escherichia fergusonii (strain ATCC 35469 / DSM 13698 / CCUG 18766 / IAM 14443 / JCM 21226 / LMG 7866 / NBRC 102419 / NCTC 12128 / CDC 0568-73).